Consider the following 409-residue polypeptide: POU domain, class 4, transcription factor 2 (409 aa).

A disordered region spans residues Tyr26 to Pro93. Over residues Ser31–Asn52 the composition is skewed to low complexity. The span at Ala53 to Arg69 shows a compositional bias: gly residues. The required for transcriptional activation stretch occupies residues Cys91–His237. The POU-IV box motif lies at Arg110–Ile119. Residues Ala153–Ala166 are compositionally biased toward low complexity. Residues Ala153–Leu188 form a disordered region. The segment covering Thr170 to Pro184 has biased composition (basic residues). The Nuclear speckle targeting signal signature appears at His171 to His185. The required for DNA-binding and transcriptional repression stretch occupies residues Ala238 to Ile409. Residues Asp250 to Glu327 form the POU-specific domain. Positions Lys345–Lys404 form a DNA-binding region, homeobox.

Belongs to the POU transcription factor family. Class-4 subfamily. As to quaternary structure, interacts with POU4F1; this interaction inhibits both POU4F1 DNA-binding and transcriptional activities. Interacts (C-terminus) with ESR1 (via DNA-binding domain); this interaction increases the estrogen receptor ESR1 transcriptional activity in a DNA- and ligand 17-beta-estradiol-independent manner. Interacts (via C-terminus) with TP53 (via N-terminus). Interacts with DLX1 (via homeobox DNA-binding domain); this interaction suppresses DLX1-mediated transcriptional activity in postnatal retina enhancing retinal ganglion cell (RGC) differentiation. Interacts with DLX2 (via homeobox DNA-binding domain); this interaction enhances RGC differentiation. Interacts (via C-terminus) with ISL1 (via C-terminus). Interacts with ISL2. Interacts with LHX2. Expressed in the brain. Expressed in the ganglion cell layer of the retina.

Its subcellular location is the nucleus. The protein resides in the nucleus speckle. It localises to the cytoplasm. Its function is as follows. Tissue-specific DNA-binding transcription factor involved in the development and differentiation of target cells. Functions either as activator or repressor modulating the rate of target gene transcription through RNA polymerase II enzyme in a promoter-dependent manner. Binds to the consensus octamer motif 5'-AT[A/T]A[T/A]T[A/T]A-3' of promoter of target genes. Plays a fundamental role in the gene regulatory network essential for retinal ganglion cell (RGC) differentiation. Binds to an octamer site to form a ternary complex with ISL1; cooperates positively with ISL1 and ISL2 to potentiate transcriptional activation of RGC target genes being involved in RGC fate commitment in the developing retina and RGC axon formation and pathfinding. Inhibits DLX1 and DLX2 transcriptional activities preventing DLX1- and DLX2-mediated ability to promote amacrine cell fate specification. In cooperation with TP53 potentiates transcriptional activation of BAX promoter activity increasing neuronal cell apoptosis. Negatively regulates BAX promoter activity in the absence of TP53. Acts as a transcriptional coactivator via its interaction with the transcription factor ESR1 by enhancing its effect on estrogen response element (ERE)-containing promoter. Antagonizes the transcriptional stimulatory activity of POU4F1 by preventing its binding to an octamer motif. Involved in TNFSF11-mediated terminal osteoclast differentiation. The sequence is that of POU domain, class 4, transcription factor 2 from Homo sapiens (Human).